Here is a 121-residue protein sequence, read N- to C-terminus: Protein GAT4 (121 aa).

Residues 29-48 (EAQHGLPRNADSQPARPRTG) are disordered. The GATA-type zinc finger occupies 53–79 (CGQCGEIKTSLQWREGPNGAACLCNAC).

This Saccharomyces cerevisiae (strain ATCC 204508 / S288c) (Baker's yeast) protein is Protein GAT4 (GAT4).